Reading from the N-terminus, the 263-residue chain is Triosephosphate isomerase (263 aa).

N10–K12 serves as a coordination point for substrate. The Electrophile role is filled by H104. The Proton acceptor role is filled by E176. Residues G182, S221, and G242–G243 contribute to the substrate site.

Belongs to the triosephosphate isomerase family. In terms of assembly, homodimer.

The protein resides in the cytoplasm. The catalysed reaction is D-glyceraldehyde 3-phosphate = dihydroxyacetone phosphate. The protein operates within carbohydrate biosynthesis; gluconeogenesis. It functions in the pathway carbohydrate degradation; glycolysis; D-glyceraldehyde 3-phosphate from glycerone phosphate: step 1/1. Functionally, involved in the gluconeogenesis. Catalyzes stereospecifically the conversion of dihydroxyacetone phosphate (DHAP) to D-glyceraldehyde-3-phosphate (G3P). The protein is Triosephosphate isomerase of Haemophilus influenzae (strain 86-028NP).